Here is a 311-residue protein sequence, read N- to C-terminus: MSRPRKPKGRPISGWLILDKPLDFGSTEAVSKIKWLFKAQKAGHAGTLDPLASGMLPIALGDATKTVPYVMDGRKIYEFTVAWGEERSTDDLEGEAVRSSAARPEEEAIRALLPKYTGVIAQVPPQFSAIKIGGERAYDLARDGETVEIPAREVEVFRLSLIGSAPNLAHFEIECGKGTYVRSLARDMGRDLGCFGHIASLRRTFVAPFGEEDMVPLADLVALEAIEDDAERLAALDAYLIDTGEALSDLPHIAVNDDQAHRLRMGNPIILRGRDAPLPTPEAYATAQGKLVAIGEIAEGEFRPKRVFATQ.

Asp-49 acts as the Nucleophile in catalysis.

It belongs to the pseudouridine synthase TruB family. Type 1 subfamily.

It carries out the reaction uridine(55) in tRNA = pseudouridine(55) in tRNA. In terms of biological role, responsible for synthesis of pseudouridine from uracil-55 in the psi GC loop of transfer RNAs. The chain is tRNA pseudouridine synthase B from Rhizobium meliloti (strain 1021) (Ensifer meliloti).